Consider the following 1265-residue polypeptide: Shugoshin 2 (1265 aa).

Positions 69–116 form a coiled coil; sequence KENSRRITTEKMLLQKEVEKLNFENTFLRLKLNNLNKKLIDIEALMNN. Disordered stretches follow at residues 161–202, 230–287, 305–339, and 381–447; these read LTSN…STQD, DVPP…NLSA, LNCN…SARE, and GIKK…GAED. Residues 190-202 show a composition bias toward polar residues; it reads SSGSTTQPLSTQD. A compositionally biased stretch (basic and acidic residues) spans 232 to 242; it reads PPRESHSHSDQ. The segment covering 305–322 has biased composition (polar residues); that stretch reads LNCNNEINGHTNETNTEM. 2 stretches are compositionally biased toward basic and acidic residues: residues 389-410 and 425-446; these read KTNE…EKKR and IGEK…RGAE. Residues 452–476 are a coiled coil; it reads FNNEQLAQMNEQLAQVNELKKMTLQ. The tract at residues 499 to 526 is disordered; that stretch reads EQEETYSLSQSSGKFHQESKFDKGQNSL. Positions 503–512 are enriched in polar residues; that stretch reads TYSLSQSSGK. Residues 603-626 adopt a coiled-coil conformation; that stretch reads EQNESNINKLRKKVNRKTEIISGM. The segment covering 1073–1083 has biased composition (basic residues); sequence NKMTSKSKKRK. The tract at residues 1073–1093 is disordered; it reads NKMTSKSKKRKTSIDPSPESH. Serine 1144 is modified (phosphoserine). Residues 1200–1265 are disordered; sequence KVNRRTQKSG…EPSLRDKMRR (66 aa). The span at 1217 to 1230 shows a compositional bias: polar residues; the sequence is DLSNTSFVSNNTAE. Positions 1231 to 1243 are enriched in basic and acidic residues; sequence SENKSEDLSSERT.

It belongs to the shugoshin family. In terms of assembly, part of an astrin (SPAG5) -kinastrin (SKAP) complex containing KNSTRN, SPAG5, PLK1, DYNLL1 and SGO2. Interacts with CDCA8. Directly interacts with PPP2CA.

The protein localises to the nucleus. It is found in the chromosome. Its subcellular location is the centromere. The protein resides in the kinetochore. In terms of biological role, cooperates with PPP2CA to protect centromeric cohesin from separase-mediated cleavage in oocytes specifically during meiosis I. Has a crucial role in protecting REC8 at centromeres from cleavage by separase. During meiosis, protects centromeric cohesion complexes until metaphase II/anaphase II transition, preventing premature release of meiosis-specific REC8 cohesin complexes from anaphase I centromeres. Is thus essential for an accurate gametogenesis. May act by targeting PPP2CA to centromeres, thus leading to cohesin dephosphorylation. Essential for recruiting KIF2C to the inner centromere and for correcting defective kinetochore attachments. Involved in centromeric enrichment of AUKRB in prometaphase. The chain is Shugoshin 2 from Homo sapiens (Human).